The following is a 477-amino-acid chain: PTS system MurNAc-GlcNAc-specific EIIBC component (477 aa).

The 83-residue stretch at 5–87 folds into the PTS EIIB type-1 domain; that stretch reads QQLAHHILDA…VKLSGVQLGE (83 aa). Cys-27 functions as the Phosphocysteine intermediate; for EIIB activity in the catalytic mechanism. The segment at 91–113 is disordered; it reads HRSNTSNIKNQAQQNKREFQQKR. Positions 92-104 are enriched in polar residues; that stretch reads RSNTSNIKNQAQQ. One can recognise a PTS EIIC type-1 domain in the interval 123–477; that stretch reads KSIANIFIPL…EMRNLNKLGD (355 aa). A run of 10 helical transmembrane segments spans residues 128–148, 167–187, 192–212, 227–247, 267–287, 298–318, 342–362, 377–397, 401–421, and 443–463; these read IFIP…IAAV, VAVL…FTGF, VFGA…LTGI, LIAG…LSII, ISLL…AGFI, VIGV…LPLV, LLPI…ALWV, ALPV…TLPL, FITA…IGHI, and LGYI…TYFF.

It localises to the cell membrane. The catalysed reaction is N-acetyl-beta-D-muramate-(1-&gt;4)-N-acetyl-D-glucosamine(out) + N(pros)-phospho-L-histidyl-[protein] = 6-phospho-N-acetyl-beta-D-muramate-(1-&gt;4)-N-acetyl-D-glucosamine(in) + L-histidyl-[protein]. Its pathway is cell wall biogenesis; peptidoglycan recycling. Functionally, the phosphoenolpyruvate-dependent sugar phosphotransferase system (sugar PTS), a major carbohydrate active transport system, catalyzes the phosphorylation of incoming sugar substrates concomitantly with their translocation across the cell membrane. This system is involved in the uptake and phosphorylation of MurNAc-GlcNAc, the principle peptidoglycan turnover product of S.aureus, yielding cytoplasmic MurNAc 6P-GlcNAc. The chain is PTS system MurNAc-GlcNAc-specific EIIBC component from Staphylococcus haemolyticus (strain JCSC1435).